The following is a 229-amino-acid chain: Flagellar L-ring protein (229 aa).

An N-terminal signal peptide occupies residues 1-25 (MKQVRLLPPAPVRAVCALAVAALAG). Cysteine 26 is lipidated: N-palmitoyl cysteine. Cysteine 26 is lipidated: S-diacylglycerol cysteine.

Belongs to the FlgH family. In terms of assembly, the basal body constitutes a major portion of the flagellar organelle and consists of four rings (L,P,S, and M) mounted on a central rod.

It is found in the cell outer membrane. Its subcellular location is the bacterial flagellum basal body. Assembles around the rod to form the L-ring and probably protects the motor/basal body from shearing forces during rotation. The chain is Flagellar L-ring protein from Burkholderia ambifaria (strain ATCC BAA-244 / DSM 16087 / CCUG 44356 / LMG 19182 / AMMD) (Burkholderia cepacia (strain AMMD)).